The following is a 262-amino-acid chain: Thiazole synthase (262 aa).

Residue Lys-98 is the Schiff-base intermediate with DXP of the active site. 1-deoxy-D-xylulose 5-phosphate-binding positions include Gly-159, 186-187 (AG), and 208-209 (NT).

This sequence belongs to the ThiG family. Homotetramer. Forms heterodimers with either ThiH or ThiS.

The protein resides in the cytoplasm. The catalysed reaction is [ThiS sulfur-carrier protein]-C-terminal-Gly-aminoethanethioate + 2-iminoacetate + 1-deoxy-D-xylulose 5-phosphate = [ThiS sulfur-carrier protein]-C-terminal Gly-Gly + 2-[(2R,5Z)-2-carboxy-4-methylthiazol-5(2H)-ylidene]ethyl phosphate + 2 H2O + H(+). The protein operates within cofactor biosynthesis; thiamine diphosphate biosynthesis. Functionally, catalyzes the rearrangement of 1-deoxy-D-xylulose 5-phosphate (DXP) to produce the thiazole phosphate moiety of thiamine. Sulfur is provided by the thiocarboxylate moiety of the carrier protein ThiS. In vitro, sulfur can be provided by H(2)S. The protein is Thiazole synthase of Hahella chejuensis (strain KCTC 2396).